The primary structure comprises 327 residues: Phenylalanine--tRNA ligase alpha subunit (327 aa).

Position 252 (E252) interacts with Mg(2+).

It belongs to the class-II aminoacyl-tRNA synthetase family. Phe-tRNA synthetase alpha subunit type 1 subfamily. In terms of assembly, tetramer of two alpha and two beta subunits. It depends on Mg(2+) as a cofactor.

The protein resides in the cytoplasm. It catalyses the reaction tRNA(Phe) + L-phenylalanine + ATP = L-phenylalanyl-tRNA(Phe) + AMP + diphosphate + H(+). The polypeptide is Phenylalanine--tRNA ligase alpha subunit (Sodalis glossinidius (strain morsitans)).